Reading from the N-terminus, the 153-residue chain is Ribosomal RNA large subunit methyltransferase H (153 aa).

Residues leucine 75, glycine 102, and 121-126 contribute to the S-adenosyl-L-methionine site; that span reads LSKLTL.

This sequence belongs to the RNA methyltransferase RlmH family. In terms of assembly, homodimer.

The protein localises to the cytoplasm. The enzyme catalyses pseudouridine(1915) in 23S rRNA + S-adenosyl-L-methionine = N(3)-methylpseudouridine(1915) in 23S rRNA + S-adenosyl-L-homocysteine + H(+). Functionally, specifically methylates the pseudouridine at position 1915 (m3Psi1915) in 23S rRNA. The polypeptide is Ribosomal RNA large subunit methyltransferase H (Campylobacter jejuni (strain RM1221)).